Here is a 201-residue protein sequence, read N- to C-terminus: Small ribosomal subunit protein uS4 (201 aa).

The S4 RNA-binding domain occupies 91–154 (SRLDNVIYRA…QKMEWFEEAQ (64 aa)).

Belongs to the universal ribosomal protein uS4 family. As to quaternary structure, part of the 30S ribosomal subunit. Contacts protein S5. The interaction surface between S4 and S5 is involved in control of translational fidelity.

Functionally, one of the primary rRNA binding proteins, it binds directly to 16S rRNA where it nucleates assembly of the body of the 30S subunit. With S5 and S12 plays an important role in translational accuracy. This Corynebacterium aurimucosum (strain ATCC 700975 / DSM 44827 / CIP 107346 / CN-1) (Corynebacterium nigricans) protein is Small ribosomal subunit protein uS4.